A 1003-amino-acid polypeptide reads, in one-letter code: Anoctamin-2 (1003 aa).

Positions 1 to 68 (MATPGPRDIP…PCGGESTRSS (68 aa)) are disordered. The Cytoplasmic segment spans residues 1-365 (MATPGPRDIP…FGEKIGLYFA (365 aa)). Residues 10-21 (PLLPGSPRRLSP) show a composition bias toward low complexity. Residues 366 to 386 (WLGLYTSFLIPSSVIGVIVFL) form a helical membrane-spanning segment. Topologically, residues 387-434 (YGCATIEEDIPSREMCDQQNAFTMCPLCDKSCDYWNLSSACGTAQASH) are extracellular. The N-linked (GlcNAc...) asparagine glycan is linked to N422. A helical membrane pass occupies residues 435–455 (LFDNPATVFFSIFMALWATMF). Over 456–538 (LENWKRLQMR…KDRFPGYLMN (83 aa)) the chain is Cytoplasmic. Residues 539–559 (FASILFMIALTFSIVFGVIVY) traverse the membrane as a helical segment. Topologically, residues 560–582 (RITTAAALSLNKATRSNVRVTVT) are extracellular. Residues 583 to 603 (ATAVIINLVVILILDEIYGAV) traverse the membrane as a helical segment. Residues 604–623 (AKWLTKIEVPKTEQTFEERL) lie on the Cytoplasmic side of the membrane. A helical transmembrane segment spans residues 624 to 644 (ILKAFLLKFVNAYSPIFYVAF). Over 645 to 748 (FKGRFVGRPG…YTGLTPEYME (104 aa)) the chain is Extracellular. The chain crosses the membrane as a helical span at residues 749–769 (MIIQFGFVTLFVASFPLAPVF). Residues 770–801 (ALLNNVIEVRLDAKKFVTELRRPDAVRTKDIG) are Cytoplasmic-facing. A helical membrane pass occupies residues 802 to 822 (IWFDILSGIGKFSVISNAFVI). Residues 823-907 (AITSDFIPRL…QYWFILSARL (85 aa)) are Extracellular-facing. Residues N841, N849, and N856 are each glycosylated (N-linked (GlcNAc...) asparagine). Residues 908–928 (AFVIIFQNLVMFLSVLVDWMI) traverse the membrane as a helical segment. At 929-1003 (PDIPTDISDQ…MSSGSQHTNV (75 aa)) the chain is on the cytoplasmic side. A disordered region spans residues 961 to 1003 (MDEPALRSPGGGDRSRSRAASSAPSGQSQLGSMMSSGSQHTNV). The segment covering 978–1003 (RAASSAPSGQSQLGSMMSSGSQHTNV) has biased composition (low complexity). The short motif at 1001–1003 (TNV) is the DLG4 binding (PDZ) element.

The protein belongs to the anoctamin family. In terms of assembly, homodimer. Component of a presynaptic protein complex recruited to specialized plasma membrane domains of photoreceptors. Interacts with DLG4 by its C-terminal region. Retina, especially in the photoreceptor synaptic terminals.

The protein resides in the cell membrane. The enzyme catalyses chloride(in) = chloride(out). Channel activity is repressed by chloride inhibitors; strongly by niflumic acid (NFA), partially by flufenamic acid (FFA), and only slightly by meclofenamic acid (MFA), 5-Nitro-2-(3-phenylpropylamino)benzoic acid (NPPB), 4-acetamido-4'-isothiocyanato-stilben-2,2'-disulfonate (SITS), and 4,4'-diisothiocyanatostilbene-2,2'-disulfonic acid (DIDS). Calcium-activated chloride channel (CaCC) which may play a role in olfactory signal transduction. Odorant molecules bind to odor-sensing receptors (OSRs), leading to an increase in calcium entry that activates CaCC current which amplifies the depolarization of the OSR cells, ANO2 seems to be the underlying chloride channel involved in this process. May mediate light perception amplification in retina. The protein is Anoctamin-2 (ANO2) of Homo sapiens (Human).